We begin with the raw amino-acid sequence, 229 residues long: Vitellogenin (229 aa).

The region spanning 1–136 is the VWFD domain; the sequence is IVMLKNDNVE…SWILAAESCR (136 aa). N-linked (GlcNAc...) asparagine glycosylation occurs at Asn198.

As to expression, expressed in liver, ovary and, to a lesser extent, in muscle, intestine, skin, kidney and heart.

Its function is as follows. Precursor of the egg-yolk proteins that are sources of nutrients during early development of oviparous organisms. Probably binds tetrodotoxin in the ovary. This chain is Vitellogenin, found in Takifugu pardalis (Panther puffer).